Consider the following 417-residue polypeptide: Carboxypeptidase B (417 aa).

Residues 1 to 16 form the signal peptide; that stretch reads MLAFLILVTVTLASAH. The propeptide at 17-110 is activation peptide; that stretch reads HSGEHFEGDK…LEAQFDSRVR (94 aa). Residues 118-412 enclose the Peptidase M14 domain; that stretch reads KYNNWETIEA…LAIKYVTSYV (295 aa). A disulfide bridge links cysteine 173 with cysteine 186. Zn(2+) contacts are provided by histidine 176 and glutamate 179. Substrate is bound by residues 176–179, arginine 234, and 251–252; these read HARE and NR. Intrachain disulfides connect cysteine 245–cysteine 268 and cysteine 259–cysteine 273. Residue histidine 304 participates in Zn(2+) binding. Substrate-binding positions include 305–306 and tyrosine 356; that span reads SY. The active-site Proton donor/acceptor is glutamate 378.

Belongs to the peptidase M14 family. Requires Zn(2+) as cofactor.

It localises to the secreted. It is found in the zymogen granule lumen. It catalyses the reaction Preferential release of a C-terminal lysine or arginine amino acid.. This is Carboxypeptidase B (CPB1) from Bos taurus (Bovine).